A 285-amino-acid chain; its full sequence is Nucleotide-binding protein Pnap_0906 (285 aa).

ATP is bound at residue 8–15 (GMSGSGKS). 57-60 (DVRS) is a binding site for GTP.

Belongs to the RapZ-like family.

Functionally, displays ATPase and GTPase activities. The polypeptide is Nucleotide-binding protein Pnap_0906 (Polaromonas naphthalenivorans (strain CJ2)).